The primary structure comprises 197 residues: Guanylate kinase (197 aa).

The interval 1–30 (MAATPRGTSPVPPDARPRLTVLSGPSGVGK) is disordered. The Guanylate kinase-like domain occupies 17 to 197 (PRLTVLSGPS…RELLALTNVV (181 aa)). Residue 24-31 (GPSGVGKS) participates in ATP binding.

Belongs to the guanylate kinase family.

It localises to the cytoplasm. It catalyses the reaction GMP + ATP = GDP + ADP. Essential for recycling GMP and indirectly, cGMP. In Streptomyces coelicolor (strain ATCC BAA-471 / A3(2) / M145), this protein is Guanylate kinase (gmk).